We begin with the raw amino-acid sequence, 490 residues long: Ribulose bisphosphate carboxylase large chain (490 aa).

Substrate is bound by residues N127 and T177. Residue K179 is the Proton acceptor of the active site. Residue K181 participates in substrate binding. Mg(2+) contacts are provided by K205, D207, and E208. K205 bears the N6-carboxylysine mark. H297 acts as the Proton acceptor in catalysis. Substrate contacts are provided by R298, H330, and S382.

This sequence belongs to the RuBisCO large chain family. Type I subfamily. As to quaternary structure, heterohexadecamer of 8 large chains and 8 small chains. Requires Mg(2+) as cofactor.

The protein localises to the plastid. It is found in the chloroplast. It carries out the reaction 2 (2R)-3-phosphoglycerate + 2 H(+) = D-ribulose 1,5-bisphosphate + CO2 + H2O. The catalysed reaction is D-ribulose 1,5-bisphosphate + O2 = 2-phosphoglycolate + (2R)-3-phosphoglycerate + 2 H(+). RuBisCO catalyzes two reactions: the carboxylation of D-ribulose 1,5-bisphosphate, the primary event in carbon dioxide fixation, as well as the oxidative fragmentation of the pentose substrate in the photorespiration process. Both reactions occur simultaneously and in competition at the same active site. The sequence is that of Ribulose bisphosphate carboxylase large chain from Detonula confervacea (Marine diatom).